The sequence spans 272 residues: WIMGHMVNDLSLVDEFLNDGANSLELDVEFSSSGTAQRTHHGFPCDCFRYCTNSEKFSTYLDYIRQLTTPGNSKFRSRLILLVMDLKLNPLSSSAAYNAGADVALNLLNHYWQRGESEARAYIVLSLSTIDGAEFISGFKSTMEKEGFADKYYDKIGWDFSGNEDLQQIRDVLENYGIREHIWQGDGITNCLPRGDSRLKEALNLRYSPSYIYADKVYTWSIDEENSIKHALWLGVDGVMTNHPERVIEVLGKSKYSDKFRLATYDDNPWEK.

The active site involves His5. Residues Glu25 and Asp27 each coordinate Mg(2+). The active-site Nucleophile is His41. Cystine bridges form between Cys45-Cys51 and Cys47-Cys191. Residue Asp85 coordinates Mg(2+).

This sequence belongs to the arthropod phospholipase D family. Class II subfamily. Mg(2+) is required as a cofactor. As to expression, expressed by the venom gland.

The protein resides in the secreted. The catalysed reaction is an N-(acyl)-sphingosylphosphocholine = an N-(acyl)-sphingosyl-1,3-cyclic phosphate + choline. It carries out the reaction an N-(acyl)-sphingosylphosphoethanolamine = an N-(acyl)-sphingosyl-1,3-cyclic phosphate + ethanolamine. The enzyme catalyses a 1-acyl-sn-glycero-3-phosphocholine = a 1-acyl-sn-glycero-2,3-cyclic phosphate + choline. It catalyses the reaction a 1-acyl-sn-glycero-3-phosphoethanolamine = a 1-acyl-sn-glycero-2,3-cyclic phosphate + ethanolamine. Its function is as follows. Dermonecrotic toxins cleave the phosphodiester linkage between the phosphate and headgroup of certain phospholipids (sphingolipid and lysolipid substrates), forming an alcohol (often choline) and a cyclic phosphate. This toxin acts on sphingomyelin (SM). It may also act on ceramide phosphoethanolamine (CPE), lysophosphatidylcholine (LPC) and lysophosphatidylethanolamine (LPE), but not on lysophosphatidylserine (LPS), and lysophosphatidylglycerol (LPG). It acts by transphosphatidylation, releasing exclusively cyclic phosphate products as second products. Induces dermonecrosis, hemolysis, increased vascular permeability, edema, inflammatory response, and platelet aggregation. In Sicarius peruensis (Six-eyed sand spider), this protein is Dermonecrotic toxin SpeSicTox-betaIB2b.